We begin with the raw amino-acid sequence, 192 residues long: MNDQYVQKTSKDGYRSRSAYKLVEMDNKFKLFQEGQKIIDLGASPGGWSQVASQKGANVVALDIKPMNAINGVEFIQCDIINEFEILREKFKDQKFDVILSDMAPESCGLKSLDHIRIMLLCEAALNFAKHFLSHGGTFVVKIFQGESDKDFCNELKKMFKTVKYFKPKSSRSESTEMYLVSLGFIGSKPSI.

Residues glycine 46, tryptophan 48, aspartate 63, aspartate 79, and aspartate 102 each coordinate S-adenosyl-L-methionine. The active-site Proton acceptor is the lysine 142.

Belongs to the class I-like SAM-binding methyltransferase superfamily. RNA methyltransferase RlmE family.

The protein localises to the cytoplasm. It carries out the reaction uridine(2552) in 23S rRNA + S-adenosyl-L-methionine = 2'-O-methyluridine(2552) in 23S rRNA + S-adenosyl-L-homocysteine + H(+). Its function is as follows. Specifically methylates the uridine in position 2552 of 23S rRNA at the 2'-O position of the ribose in the fully assembled 50S ribosomal subunit. The protein is Ribosomal RNA large subunit methyltransferase E of Wolbachia pipientis wMel.